Here is a 396-residue protein sequence, read N- to C-terminus: 1-deoxy-D-xylulose 5-phosphate reductoisomerase (396 aa).

NADPH is bound by residues T17, G18, S19, I20, N47, and N130. Position 131 (K131) interacts with 1-deoxy-D-xylulose 5-phosphate. E132 lines the NADPH pocket. A Mn(2+)-binding site is contributed by D156. 1-deoxy-D-xylulose 5-phosphate is bound by residues S157, E158, S182, and H205. Residue E158 coordinates Mn(2+). An NADPH-binding site is contributed by G211. Positions 218, 223, 224, and 227 each coordinate 1-deoxy-D-xylulose 5-phosphate. Position 227 (E227) interacts with Mn(2+).

This sequence belongs to the DXR family. The cofactor is Mg(2+). It depends on Mn(2+) as a cofactor.

The catalysed reaction is 2-C-methyl-D-erythritol 4-phosphate + NADP(+) = 1-deoxy-D-xylulose 5-phosphate + NADPH + H(+). It participates in isoprenoid biosynthesis; isopentenyl diphosphate biosynthesis via DXP pathway; isopentenyl diphosphate from 1-deoxy-D-xylulose 5-phosphate: step 1/6. Catalyzes the NADPH-dependent rearrangement and reduction of 1-deoxy-D-xylulose-5-phosphate (DXP) to 2-C-methyl-D-erythritol 4-phosphate (MEP). This chain is 1-deoxy-D-xylulose 5-phosphate reductoisomerase, found in Rhizobium etli (strain CIAT 652).